The following is a 392-amino-acid chain: Cytochrome b (392 aa).

Transmembrane regions (helical) follow at residues 38–58, 82–104, 119–139, and 185–205; these read FGSL…FLAM, WLLR…LHIF, VRCL…TGYV, and FFSL…LHLA. 2 residues coordinate heme b: His88 and His102. Residues His189 and His203 each coordinate heme b. A ubiquinone is bound at residue His208. 4 consecutive transmembrane segments (helical) span residues 231 to 251, 295 to 315, 327 to 347, and 354 to 373; these read FYVK…IWIF, SGGV…PFFK, IHQG…WIGC, and FVTI…AITP.

The protein belongs to the cytochrome b family. As to quaternary structure, the main subunits of complex b-c1 are: cytochrome b, cytochrome c1 and the Rieske protein. Requires heme b as cofactor.

Its subcellular location is the mitochondrion inner membrane. Its function is as follows. Component of the ubiquinol-cytochrome c reductase complex (complex III or cytochrome b-c1 complex) that is part of the mitochondrial respiratory chain. The b-c1 complex mediates electron transfer from ubiquinol to cytochrome c. Contributes to the generation of a proton gradient across the mitochondrial membrane that is then used for ATP synthesis. This is Cytochrome b (MT-CYB) from Vicia faba (Broad bean).